The following is a 59-amino-acid chain: U-myrmeciitoxin(01)-Mg5b (59 aa).

Residues 1–21 (MRLSYLSLALAIIFVLTIMHA) form the signal peptide. A propeptide spanning residues 22–38 (SNVEAKASADPEPDAVG) is cleaved from the precursor.

As to expression, expressed by the venom gland.

The protein resides in the secreted. Its function is as follows. May have antimicrobial properties, like most ant linear peptides. This is U-myrmeciitoxin(01)-Mg5b from Myrmecia gulosa (Red bulldog ant).